A 171-amino-acid polypeptide reads, in one-letter code: Tetratricopeptide repeat protein 9C (171 aa).

TPR repeat units lie at residues 8 to 41 (AQLY…LRGL), 72 to 107 (TDCY…QPDN), and 108 to 141 (AKAL…QPKD).

The protein belongs to the TTC9 family.

The chain is Tetratricopeptide repeat protein 9C (TTC9C) from Homo sapiens (Human).